We begin with the raw amino-acid sequence, 93 residues long: MGNVFSGWHLLVILLVIVLLFGTSRLPKLSKSVVEALKIFRRSFNEASDITRSQDGHPDSQGNFAESASSVPFVKSEKQSEKRASVTEAKKSK.

The helical transmembrane segment at 1 to 21 (MGNVFSGWHLLVILLVIVLLF) threads the bilayer. A disordered region spans residues 49–93 (DITRSQDGHPDSQGNFAESASSVPFVKSEKQSEKRASVTEAKKSK). The span at 60–70 (SQGNFAESASS) shows a compositional bias: polar residues. Over residues 75–93 (KSEKQSEKRASVTEAKKSK) the composition is skewed to basic and acidic residues.

The protein belongs to the TatA/E family. In terms of assembly, the Tat system comprises two distinct complexes: a TatABC complex, containing multiple copies of TatA, TatB and TatC subunits, and a separate TatA complex, containing only TatA subunits. Substrates initially bind to the TatABC complex, which probably triggers association of the separate TatA complex to form the active translocon.

The protein localises to the cell membrane. In terms of biological role, part of the twin-arginine translocation (Tat) system that transports large folded proteins containing a characteristic twin-arginine motif in their signal peptide across membranes. TatA could form the protein-conducting channel of the Tat system. In Tropheryma whipplei (strain TW08/27) (Whipple's bacillus), this protein is Sec-independent protein translocase protein TatA.